We begin with the raw amino-acid sequence, 389 residues long: Endonuclease 8-like 1 (389 aa).

Catalysis depends on Pro-2, which acts as the Schiff-base intermediate with DNA. Residue Glu-3 is the Proton donor of the active site. Lys-54 acts as the Proton donor; for beta-elimination activity in catalysis. Asn-176 serves as a coordination point for DNA. Positions 278-389 are disordered; it reads TIWFQGDPGP…PREAGESSAS (112 aa). A compositionally biased stretch (basic residues) spans 322–333; the sequence is SRMRRARKHPPK. The span at 336-351 shows a compositional bias: polar residues; that stretch reads AQQSEGAGLQQNQETP. The segment covering 357–373 has biased composition (basic residues); that stretch reads GKRRGQRASTGHRRRPK. Over residues 374–389 the composition is skewed to basic and acidic residues; it reads TIPDTRPREAGESSAS.

This sequence belongs to the FPG family. Detected in heart, spleen and lung.

It localises to the cytoplasm. The protein localises to the cytoskeleton. The protein resides in the microtubule organizing center. It is found in the centrosome. Its subcellular location is the nucleus. It localises to the chromosome. It catalyses the reaction 2'-deoxyribonucleotide-(2'-deoxyribose 5'-phosphate)-2'-deoxyribonucleotide-DNA = a 3'-end 2'-deoxyribonucleotide-(2,3-dehydro-2,3-deoxyribose 5'-phosphate)-DNA + a 5'-end 5'-phospho-2'-deoxyribonucleoside-DNA + H(+). Its function is as follows. Involved in base excision repair of DNA damaged by oxidation or by mutagenic agents. Acts as a DNA glycosylase that recognizes and removes damaged bases. Has a preference for oxidized pyrimidines, such as thymine glycol, formamidopyrimidine (Fapy) and 5-hydroxyuracil. Has marginal activity towards 8-oxoguanine. Has AP (apurinic/apyrimidinic) lyase activity and introduces nicks in the DNA strand. Cleaves the DNA backbone by beta-delta elimination to generate a single-strand break at the site of the removed base with both 3'- and 5'-phosphates. Has DNA glycosylase/lyase activity towards mismatched uracil and thymine, in particular in U:C and T:C mismatches. Specifically binds 5-hydroxymethylcytosine (5hmC), suggesting that it acts as a specific reader of 5hmC. This is Endonuclease 8-like 1 (Neil1) from Mus musculus (Mouse).